The primary structure comprises 399 residues: Stomatin-like protein 1 (399 aa).

The short motif at 6–10 (GYRAL) is the Tyrosine-type lysosomal sorting signal element. At Ser28 the chain carries Phosphoserine. Residues 58-78 (LVSVLGFLLLLLTFPISGWFA) form a helical; Signal-anchor for type III membrane protein membrane-spanning segment. Over 79–399 (LKIVPTYERM…KLEAVLKALK (321 aa)) the chain is Cytoplasmic. The SCP2 domain maps to 288–399 (KQPVAEGLLT…KLEAVLKALK (112 aa)).

Belongs to the band 7/mec-2 family. In terms of assembly, interacts with STOM; may redistribute STOM from the plasma membrane to late endosomes. In terms of tissue distribution, expressed in dorsal root ganglion neurons.

It is found in the membrane. Its subcellular location is the cytoplasmic vesicle. It localises to the cell membrane. The protein localises to the late endosome membrane. The protein resides in the membrane raft. Its function is as follows. May play a role in cholesterol transfer to late endosomes. May play a role in modulating membrane acid-sensing ion channels. Can specifically inhibit proton-gated current of ASIC1 isoform 1. Can increase inactivation speed of ASIC3. May be involved in regulation of proton sensing in dorsal root ganglions. The protein is Stomatin-like protein 1 (Stoml1) of Mus musculus (Mouse).